The chain runs to 471 residues: Meiosis-specific with OB domain-containing protein (471 aa).

The segment at residues 167–272 is a DNA-binding region (OB); sequence IINVLAAVKS…EANILLNFIR (106 aa).

The protein belongs to the MEIOB family. In terms of assembly, component of a multiprotein complex with RPA2 and SPATA22. Interacts with SPATA22. Interacts with the complex BRME1:HSF2BP:BRCA2.

The protein resides in the cytoplasm. It localises to the nucleus. The protein localises to the chromosome. Single-stranded DNA-binding protein required for homologous recombination in meiosis I. Required for double strand breaks (DSBs) repair and crossover formation and promotion of faithful and complete synapsis. Not required for the initial loading of recombinases but required to maintain a proper number of RAD51 and DMC1 foci after the zygotene stage. May act by ensuring the stabilization of recombinases, which is required for successful homology search and meiotic recombination. Displays Single-stranded DNA 3'-5' exonuclease activity in vitro. The sequence is that of Meiosis-specific with OB domain-containing protein (MEIOB) from Macaca fascicularis (Crab-eating macaque).